A 203-amino-acid polypeptide reads, in one-letter code: Urease accessory protein UreG (203 aa).

Residue 10 to 17 (GPVGAGKT) participates in GTP binding.

This sequence belongs to the SIMIBI class G3E GTPase family. UreG subfamily. Homodimer. UreD, UreF and UreG form a complex that acts as a GTP-hydrolysis-dependent molecular chaperone, activating the urease apoprotein by helping to assemble the nickel containing metallocenter of UreC. The UreE protein probably delivers the nickel.

It localises to the cytoplasm. Functionally, facilitates the functional incorporation of the urease nickel metallocenter. This process requires GTP hydrolysis, probably effectuated by UreG. This chain is Urease accessory protein UreG, found in Micrococcus luteus (strain ATCC 4698 / DSM 20030 / JCM 1464 / CCM 169 / CCUG 5858 / IAM 1056 / NBRC 3333 / NCIMB 9278 / NCTC 2665 / VKM Ac-2230) (Micrococcus lysodeikticus).